A 407-amino-acid chain; its full sequence is Putative glucose/galactose transporter (407 aa).

The next 12 helical transmembrane spans lie at 11-31 (GSLT…DILI), 47-67 (LIQF…GNVI), 70-90 (IGYP…CALF), 96-116 (FGSY…IVCL), 139-159 (VQAF…LLIF), 180-200 (VQMP…VMYL), 225-245 (FVFG…IGSF), 263-283 (HYLV…SALM), 300-320 (IILI…ALTF), 321-341 (VGFF…LNLG), 349-369 (GVIS…GVVT), and 378-398 (NLLY…FFAL).

This sequence belongs to the major facilitator superfamily. FHS transporter (TC 2.A.1.7) family.

The protein resides in the cell inner membrane. Intake of glucose and galactose. In Helicobacter pylori (strain J99 / ATCC 700824) (Campylobacter pylori J99), this protein is Putative glucose/galactose transporter (gluP).